A 166-amino-acid chain; its full sequence is Large ribosomal subunit protein bL17 (166 aa).

The interval 122-166 (PESAPVKAKQDRSKRVRGSKKTQEGSEKAEVSASAGEAAAVTEEK) is disordered. The span at 142–151 (KTQEGSEKAE) shows a compositional bias: basic and acidic residues. Residues 152–166 (VSASAGEAAAVTEEK) are compositionally biased toward low complexity.

It belongs to the bacterial ribosomal protein bL17 family. As to quaternary structure, part of the 50S ribosomal subunit. Contacts protein L32.

In Chlorobium phaeobacteroides (strain BS1), this protein is Large ribosomal subunit protein bL17.